The primary structure comprises 59 residues: Single-pass membrane and coiled-coil domain-containing protein 4 (59 aa).

The segment at 1–23 is disordered; it reads MRQLKGKPKKETSKDKKERKQAM. Residues 9–22 are compositionally biased toward basic and acidic residues; the sequence is KKETSKDKKERKQA. The stretch at 9–31 forms a coiled coil; the sequence is KKETSKDKKERKQAMQEARQQIT. A helical membrane pass occupies residues 32–52; it reads TVVLPTLAVVVLLIVVFVYVA.

It belongs to the SMCO4 family.

Its subcellular location is the membrane. The sequence is that of Single-pass membrane and coiled-coil domain-containing protein 4 (Smco4) from Mus musculus (Mouse).